The chain runs to 51 residues: Large ribosomal subunit protein eL39 (51 aa).

This sequence belongs to the eukaryotic ribosomal protein eL39 family. As to quaternary structure, interacts with YIH1.

This chain is Large ribosomal subunit protein eL39 (RPL39), found in Kluyveromyces lactis (strain ATCC 8585 / CBS 2359 / DSM 70799 / NBRC 1267 / NRRL Y-1140 / WM37) (Yeast).